The following is a 134-amino-acid chain: Acyl carrier protein, chloroplastic (134 aa).

The transit peptide at 1–51 (MATTFSASVSTLATSLATPTRISFQKPALVSRTNLSFNLRRSIPTRLSVSC) directs the protein to the chloroplast. One can recognise a Carrier domain in the interval 55-130 (PETIEKVSKI…EAAELIEELV (76 aa)). Ser-90 carries the O-(pantetheine 4'-phosphoryl)serine modification.

This sequence belongs to the acyl carrier protein (ACP) family. Post-translationally, 4'-phosphopantetheine is transferred from CoA to a specific serine of apo-ACP by acpS. This modification is essential for activity because fatty acids are bound in thioester linkage to the sulfhydryl of the prosthetic group. As to expression, seed.

It localises to the plastid. Its subcellular location is the chloroplast. Its pathway is lipid metabolism; fatty acid biosynthesis. In terms of biological role, carrier of the growing fatty acid chain in fatty acid biosynthesis. In Brassica napus (Rape), this protein is Acyl carrier protein, chloroplastic (ACL1.A3).